A 308-amino-acid chain; its full sequence is 1,4-dihydroxy-2-naphthoate octaprenyltransferase (308 aa).

Helical transmembrane passes span 22–42 (TLPL…WANP), 47–67 (GLVM…SNFA), 101–121 (WGLI…IGIA), 129–149 (FAFA…TVGV), 153–173 (GYMG…GVGG), 186–206 (IILP…INNL), 235–255 (ILLS…AISW), 256–276 (TNYL…FVYC), and 286–306 (ILAQ…LGLL).

This sequence belongs to the MenA family. Type 1 subfamily.

The protein localises to the cell inner membrane. It catalyses the reaction an all-trans-polyprenyl diphosphate + 1,4-dihydroxy-2-naphthoate + H(+) = a 2-demethylmenaquinol + CO2 + diphosphate. The protein operates within quinol/quinone metabolism; menaquinone biosynthesis; menaquinol from 1,4-dihydroxy-2-naphthoate: step 1/2. In terms of biological role, conversion of 1,4-dihydroxy-2-naphthoate (DHNA) to demethylmenaquinone (DMK). The sequence is that of 1,4-dihydroxy-2-naphthoate octaprenyltransferase from Haemophilus influenzae (strain ATCC 51907 / DSM 11121 / KW20 / Rd).